The primary structure comprises 470 residues: uncharacterized protein (470 aa).

The stretch at 418–453 (SECCEEQEEKEKKKEKEKEKKKEKDDDDDQQNNNNN) forms a coiled coil. The disordered stretch occupies residues 423 to 470 (EQEEKEKKKEKEKEKKKEKDDDDDQQNNNNNDQNGLGLGLGLNFGLNL). The span at 426–441 (EKEKKKEKEKEKKKEK) shows a compositional bias: basic and acidic residues. Over residues 448–457 (QNNNNNDQNG) the composition is skewed to low complexity.

This is an uncharacterized protein from Acidianus bottle-shaped virus (isolate Italy/Pozzuoli) (ABV).